The primary structure comprises 151 residues: Mitochondrial intermembrane space import and assembly protein 40 homolog (151 aa).

Positions 1–35 (MGQGLSQPAQAVEEPSPPAVEAAPSSSPSPAPAPS) are disordered. Positions 7–26 (QPAQAVEEPSPPAVEAAPSS) are enriched in low complexity. Cystine bridges form between cysteine 65/cysteine 67, cysteine 76/cysteine 109, and cysteine 86/cysteine 99. The region spanning 73–117 (NGPCGSQFVDAFSCFLKSTEEEKGSDCVKPFIALQDCIKINPEAF) is the CHCH domain. 2 consecutive short sequence motifs (cx9C motif) follow at residues 76–86 (CGSQFVDAFSC) and 99–109 (CVKPFIALQDC). Residues 123-151 (EEEENDEEAEKSNLKVRAPAWSRESKPKL) are disordered.

Its subcellular location is the mitochondrion intermembrane space. The protein localises to the peroxisome matrix. Its function is as follows. Required for the import and folding of small cysteine-containing proteins in the mitochondrial intermembrane space. The protein is Mitochondrial intermembrane space import and assembly protein 40 homolog of Oryza sativa subsp. japonica (Rice).